The sequence spans 477 residues: tRNA(Ile)-lysidine synthase (477 aa).

36–41 contributes to the ATP binding site; the sequence is SGGADS.

It belongs to the tRNA(Ile)-lysidine synthase family.

The protein localises to the cytoplasm. The catalysed reaction is cytidine(34) in tRNA(Ile2) + L-lysine + ATP = lysidine(34) in tRNA(Ile2) + AMP + diphosphate + H(+). In terms of biological role, ligates lysine onto the cytidine present at position 34 of the AUA codon-specific tRNA(Ile) that contains the anticodon CAU, in an ATP-dependent manner. Cytidine is converted to lysidine, thus changing the amino acid specificity of the tRNA from methionine to isoleucine. The chain is tRNA(Ile)-lysidine synthase from Treponema pallidum (strain Nichols).